A 458-amino-acid chain; its full sequence is SH2 domain-containing protein 7 (458 aa).

Positions 51 to 142 (WFHGFITRKQ…PFGETLAAAC (92 aa)) constitute an SH2 domain. Disordered regions lie at residues 204–235 (RSVSDEVSAEVPTRVPPIPRRSPSLLDESPAG) and 267–326 (AGSL…TLGS). Over residues 278 to 288 (PSGKLSDEDQN) the composition is skewed to basic and acidic residues. Polar residues predominate over residues 304 to 326 (QGSTMPYTSLGFSLPPSSETLGS).

This is SH2 domain-containing protein 7 (Sh2d7) from Mus musculus (Mouse).